Here is an 81-residue protein sequence, read N- to C-terminus: RNA-binding protein Hfq (81 aa).

In terms of domain architecture, Sm spans 10–69 (DPFLNTLRKEHIPVSIYLVNGIKLQGHIDSFDQYVVLLKNTVTQMVYKHAISTVVPARAV).

Belongs to the Hfq family. In terms of assembly, homohexamer.

Its function is as follows. RNA chaperone that binds small regulatory RNA (sRNAs) and mRNAs to facilitate mRNA translational regulation in response to envelope stress, environmental stress and changes in metabolite concentrations. Also binds with high specificity to tRNAs. The chain is RNA-binding protein Hfq from Nitrosospira multiformis (strain ATCC 25196 / NCIMB 11849 / C 71).